The primary structure comprises 224 residues: MDVMKGTTTVGLICDDAVILATDKRASMGNLVADKEAKKLYKIDDYIALTIAGSVGDAQAIVRLLTAEAKLYKMRTGKNISPLACATLLSNILHSNRYFPFLTQLIIGGYDLLEGAKLFSLDPLGGMNEEKTFTATGSGSPIAYGVLEAGYDRDMPVEEGIKLALKALKSAMERDTYSGNGISLAVITKEGVKIFEDEEIEKILNEITSKSKKKTTKRSRRKSK.

The propeptide at 1 to 6 (MDVMKG) is removed in mature form; by autocatalysis. The Nucleophile role is filled by threonine 7.

Belongs to the peptidase T1B family. In terms of assembly, the 20S proteasome core is composed of 14 alpha and 14 beta subunits that assemble into four stacked heptameric rings, resulting in a barrel-shaped structure. The two inner rings, each composed of seven catalytic beta subunits, are sandwiched by two outer rings, each composed of seven alpha subunits. The catalytic chamber with the active sites is on the inside of the barrel. Has a gated structure, the ends of the cylinder being occluded by the N-termini of the alpha-subunits. Is capped at one or both ends by the proteasome regulatory ATPase, PAN.

The protein resides in the cytoplasm. It catalyses the reaction Cleavage of peptide bonds with very broad specificity.. With respect to regulation, the formation of the proteasomal ATPase PAN-20S proteasome complex, via the docking of the C-termini of PAN into the intersubunit pockets in the alpha-rings, triggers opening of the gate for substrate entry. Interconversion between the open-gate and close-gate conformations leads to a dynamic regulation of the 20S proteasome proteolysis activity. In terms of biological role, component of the proteasome core, a large protease complex with broad specificity involved in protein degradation. This Methanocaldococcus fervens (strain DSM 4213 / JCM 15782 / AG86) (Methanococcus fervens) protein is Proteasome subunit beta.